We begin with the raw amino-acid sequence, 379 residues long: L-lactate dehydrogenase (379 aa).

Positions 1–379 constitute an FMN hydroxy acid dehydrogenase domain; the sequence is MIISASTDYR…ITSDLLVKER (379 aa). Tyrosine 24 is a binding site for substrate. FMN is bound by residues serine 106 and glutamine 127. Tyrosine 129 provides a ligand contact to substrate. Threonine 155 lines the FMN pocket. Arginine 164 is a binding site for substrate. Lysine 251 contacts FMN. The Proton acceptor role is filled by histidine 275. Residue arginine 278 coordinates substrate. Residue 306–330 coordinates FMN; the sequence is DSGIRTGLDVVRMLALGADTVLLGR.

It belongs to the FMN-dependent alpha-hydroxy acid dehydrogenase family. As to quaternary structure, homotetramer. Requires FMN as cofactor.

The protein localises to the cell inner membrane. It carries out the reaction (S)-lactate + A = pyruvate + AH2. Catalyzes the conversion of L-lactate to pyruvate. Is coupled to the respiratory chain. The polypeptide is L-lactate dehydrogenase (Ectopseudomonas mendocina (strain ymp) (Pseudomonas mendocina)).